A 125-amino-acid polypeptide reads, in one-letter code: DNA-directed RNA polymerase I subunit RPA12 (125 aa).

The interval 1–60 is interaction with RPA2; sequence MSVVGSLIFCLDCGDLLENPNAVLGSNVECSQCKAIYPKSQFSNLKVVTTTADDAFPSSL. Residues 1–69 are necessary and sufficient for recruitment into Pol I; sequence MSVVGSLIFC…LRAKKSVVKT (69 aa). Zn(2+)-binding residues include Cys-10, Cys-13, Cys-30, Cys-33, Cys-86, Cys-89, Cys-114, and Cys-117. The C4-type zinc-finger motif lies at 10–33; sequence CLDCGDLLENPNAVLGSNVECSQC. Positions 79-125 are required for RNA cleavage, but not essential for elongation activity; it reads GATIKEKCPQCGNEEMNYHTLQLRSADEGATVFYTCTSCGYKFRTNN. The TFIIS-type zinc-finger motif lies at 82–122; that stretch reads IKEKCPQCGNEEMNYHTLQLRSADEGATVFYTCTSCGYKFR.

Belongs to the archaeal RpoM/eukaryotic RPA12/RPB9/RPC11 RNA polymerase family. Component of the RNA polymerase I (Pol I) complex consisting of 14 subunits: RPA135, RPA190, RPC40, RPA14, RPB5, RPO26, RPA43, RPB8, RPA12, RPB10, RPC19, RPC10, RPA49 and RPA34. The complex is composed of a horseshoe-shaped core containing ten subunits (RPA135, RPA190, RPB5, RPO26, RPB8, RPB10, RPC10, RPA12, RPC19 and RPC40) where RPA135 and RPA190 form the DNA-binding cleft. Outside of the core, RPA14 and RPA43 form the stalk that mediates interactions with transcription initiation factors and newly synthesized RNA. Interacts with RPA2/RPA135. Peripheral subunit that binds the catalytic zinc ion that is required for RNA cleavage. The heterodimer formed by RPA34 and RPA49 stabilizes subunit RPA12 and stimulates RPA12-dependent RNA cleavage. Involved in the recruitment of RPA49 to Pol I.

It localises to the nucleus. The protein localises to the nucleolus. In terms of biological role, DNA-dependent RNA polymerases catalyze the transcription of DNA into RNA using the four ribonucleoside triphosphates as substrates. Component of RNA polymerase I (Pol I) which synthesizes ribosomal RNA precursors. Besides, RNA polymerase I has intrinsic RNA cleavage activity. Proposed to contribute to the polymerase catalytic activity and form the polymerase active center together with the two largest subunits. Subunit RPA12 contributes a catalytic zinc ribbon that is required for RNA cleavage by Pol I. Involved in transcriptional termination. The sequence is that of DNA-directed RNA polymerase I subunit RPA12 (RPA12) from Saccharomyces cerevisiae (strain ATCC 204508 / S288c) (Baker's yeast).